A 286-amino-acid chain; its full sequence is 2-hydroxy-6-oxo-6-phenylhexa-2,4-dienoate hydrolase (286 aa).

Substrate contacts are provided by residues 42–43 (GG), Asn51, Asn111, Ser180, and Arg190. His265 acts as the Proton acceptor in catalysis. Trp266 is a binding site for substrate.

This sequence belongs to the AB hydrolase superfamily. BphD family. As to quaternary structure, homodimer.

It catalyses the reaction 2,6-dioxo-6-phenylhexa-3-enoate + H2O = 2-oxopent-4-enoate + benzoate + H(+). It functions in the pathway xenobiotic degradation; biphenyl degradation; 2-hydroxy-2,4-pentadienoate and benzoate from biphenyl: step 4/4. In terms of biological role, catalyzes an unusual C-C bond hydrolysis of 2-hydroxy-6-oxo-6-phenylhexa-2,4-dienoic acid (HOPDA) to produce benzoic acid and 2-hydroxy-2,4-pentadienoic acid (HPD). The chain is 2-hydroxy-6-oxo-6-phenylhexa-2,4-dienoate hydrolase from Polaromonas naphthalenivorans (strain CJ2).